Consider the following 171-residue polypeptide: UPF0398 protein SPy_1647/M5005_Spy1353 (171 aa).

The protein belongs to the UPF0398 family.

In Streptococcus pyogenes serotype M1, this protein is UPF0398 protein SPy_1647/M5005_Spy1353.